Consider the following 312-residue polypeptide: Cell division control protein 2 homolog D (312 aa).

The 291-residue stretch at 14-304 (FVKLEKVGEG…AKKAMEHPYF (291 aa)) folds into the Protein kinase domain. Residues 20 to 28 (VGEGTYGKV) and lysine 43 contribute to the ATP site. Threonine 24 is modified (phosphothreonine). A Phosphotyrosine modification is found at tyrosine 25. The active-site Proton acceptor is the aspartate 145. Threonine 179 is subject to Phosphothreonine; by CAK.

This sequence belongs to the protein kinase superfamily. CMGC Ser/Thr protein kinase family. CDC2/CDKX subfamily.

The catalysed reaction is L-seryl-[protein] + ATP = O-phospho-L-seryl-[protein] + ADP + H(+). The enzyme catalyses L-threonyl-[protein] + ATP = O-phospho-L-threonyl-[protein] + ADP + H(+). It carries out the reaction [DNA-directed RNA polymerase] + ATP = phospho-[DNA-directed RNA polymerase] + ADP + H(+). Functionally, plays a key role in the control of the eukaryotic cell cycle. The chain is Cell division control protein 2 homolog D (CDC2D) from Antirrhinum majus (Garden snapdragon).